A 724-amino-acid chain; its full sequence is Hyperosmolality-gated Ca2+ permeable channel 3.1 (724 aa).

Residues 1–4 (MEFG) lie on the Extracellular side of the membrane. A helical membrane pass occupies residues 5-25 (SFLVSLGTSFVIFVILMLLFT). Residues 26 to 85 (WLSRKSGNAPIYYPNRILKGLEPWEGTSLTRNPFAWMREALTSSEQDVVNLSGVDTAVHF) are Cytoplasmic-facing. A helical transmembrane segment spans residues 86–108 (VFLSTVLGIFACSSLLLLPTLLP). Residues 109 to 147 (LAATDNNIKNTKNATDTTSKGTFSQLDNLSMANITKKSS) lie on the Extracellular side of the membrane. Residues 148 to 170 (RLWAFLGAVYWISLVTYFFLWKA) form a helical membrane-spanning segment. Topologically, residues 171-358 (YKHVSSLRAQ…WQNLNIKLFS (188 aa)) are cytoplasmic. Positions 241 to 309 (EKLEGYKKKL…KAVLAEKQQT (69 aa)) form a coiled coil. A helical membrane pass occupies residues 359-385 (RIIRQYFIYFFVAVTILFYMIPIAFVS). The Extracellular portion of the chain corresponds to 386 to 411 (AITTLKNLQRIIPFIKPVVEITAIRT). A helical transmembrane segment spans residues 412 to 439 (VLESFLPQIALIVFLAMLPKLLLFLSKA). The Cytoplasmic portion of the chain corresponds to 440-448 (EGIPSQSHA). Residues 449-472 (IRAASGKYFYFSVFNVFIGVTLAG) traverse the membrane as a helical segment. Residues 473–497 (TLFNTVKDIAKNPKLDMIINLLATS) lie on the Extracellular side of the membrane. The helical transmembrane segment at 498-529 (LPKSATFFLTYVALKFFIGYGLELSRIIPLII) threads the bilayer. At 530 to 554 (FHLKKKYLCKTEAEVKEAWYPGDLS) the chain is on the cytoplasmic side. A helical membrane pass occupies residues 555 to 574 (YATRVPGDMLILTITFCYSV). Ile-575 is a topological domain (extracellular). Residues 576–594 (APLILIFGITYFGLGWLVL) form a helical membrane-spanning segment. Over 595–612 (RNQALKVYVPSYESYGRM) the chain is Cytoplasmic. Residues 613–636 (WPHIHQRILAALFLFQVVMFGYLG) form a helical membrane-spanning segment. At 637–641 (AKTFF) the chain is on the extracellular side. A helical transmembrane segment spans residues 642 to 662 (YTALVIPLIITSLIFGYVCRQ). The Cytoplasmic portion of the chain corresponds to 663–724 (KFYGGFEHTA…YQDFNAIAGV (62 aa)).

The protein belongs to the CSC1 (TC 1.A.17) family. Homodimer.

Its subcellular location is the membrane. In terms of biological role, acts as a hyperosmolarity-gated non-selective cation channel that permeates Ca(2+) ions. Mechanosensitive ion channel that converts mechanical stimuli into a flow of ions: activated in response to membrane stretch. Not activated in response to membrane poke. This chain is Hyperosmolality-gated Ca2+ permeable channel 3.1, found in Arabidopsis thaliana (Mouse-ear cress).